The following is a 497-amino-acid chain: Ectonucleoside triphosphate diphosphohydrolase 8 (497 aa).

Over 1–8 (MGLSWKER) the chain is Cytoplasmic. A helical transmembrane segment spans residues 9–29 (VFMALLGVAAASGLTMLVLIL). Residues 30-473 (VKAINVLLPA…AQSYSIWTAG (444 aa)) lie on the Extracellular side of the membrane. Cys-78 and Cys-102 are joined by a disulfide. The Proton acceptor role is filled by Glu-168. Residues Cys-245 and Cys-294 are joined by a disulfide bond. Asn-306 carries an N-linked (GlcNAc...) asparagine glycan. A disulfide bridge links Cys-331 with Cys-337. The N-linked (GlcNAc...) asparagine glycan is linked to Asn-365. A disulfide bridge connects residues Cys-383 and Cys-405. The helical transmembrane segment at 474-494 (VVFAVLTLVAILGAAAIQIFW) threads the bilayer. Residues 495–497 (TQD) are Cytoplasmic-facing.

Belongs to the GDA1/CD39 NTPase family. Requires Ca(2+) as cofactor. The cofactor is Mg(2+). Post-translationally, N-glycosylated. As to expression, expressed in liver, jejunum and kidney.

It localises to the cell membrane. The catalysed reaction is a ribonucleoside 5'-triphosphate + 2 H2O = a ribonucleoside 5'-phosphate + 2 phosphate + 2 H(+). Its function is as follows. Canalicular ectonucleoside NTPDase responsible for the main hepatic NTPDase activity. Ectonucleoside NTPDases catalyze the hydrolysis of gamma- and beta-phosphate residues of nucleotides, playing a central role in concentration of extracellular nucleotides. Has activity toward ATP, ADP, UTP and UDP, but not toward AMP. The polypeptide is Ectonucleoside triphosphate diphosphohydrolase 8 (Entpd8) (Mus musculus (Mouse)).